We begin with the raw amino-acid sequence, 215 residues long: Probable transaldolase (215 aa).

Lysine 83 serves as the catalytic Schiff-base intermediate with substrate.

This sequence belongs to the transaldolase family. Type 3B subfamily.

The protein resides in the cytoplasm. It catalyses the reaction D-sedoheptulose 7-phosphate + D-glyceraldehyde 3-phosphate = D-erythrose 4-phosphate + beta-D-fructose 6-phosphate. It functions in the pathway carbohydrate degradation; pentose phosphate pathway; D-glyceraldehyde 3-phosphate and beta-D-fructose 6-phosphate from D-ribose 5-phosphate and D-xylulose 5-phosphate (non-oxidative stage): step 2/3. In terms of biological role, transaldolase is important for the balance of metabolites in the pentose-phosphate pathway. The polypeptide is Probable transaldolase (Methanococcus maripaludis (strain DSM 14266 / JCM 13030 / NBRC 101832 / S2 / LL)).